The sequence spans 166 residues: Cyclic pyranopterin monophosphate synthase (166 aa).

Residues 83–85 (LCH) and 121–122 (ME) contribute to the substrate site. D136 is an active-site residue.

Belongs to the MoaC family. Homohexamer; trimer of dimers.

It catalyses the reaction (8S)-3',8-cyclo-7,8-dihydroguanosine 5'-triphosphate = cyclic pyranopterin phosphate + diphosphate. Its pathway is cofactor biosynthesis; molybdopterin biosynthesis. In terms of biological role, catalyzes the conversion of (8S)-3',8-cyclo-7,8-dihydroguanosine 5'-triphosphate to cyclic pyranopterin monophosphate (cPMP). The chain is Cyclic pyranopterin monophosphate synthase from Rhodospirillum rubrum (strain ATCC 11170 / ATH 1.1.1 / DSM 467 / LMG 4362 / NCIMB 8255 / S1).